The primary structure comprises 350 residues: Flap endonuclease 1 (350 aa).

Residues 1-102 (MGVTALRELI…REIERRQKLK (102 aa)) form an N-domain region. Mg(2+) is bound by residues D31, D84, E156, E158, D177, D179, and D240. The segment at 120–261 (EARKYAQMSA…TALRYVKSYG (142 aa)) is I-domain. An interaction with PCNA region spans residues 339 to 347 (KQSTLDMFF).

It belongs to the XPG/RAD2 endonuclease family. FEN1 subfamily. As to quaternary structure, interacts with PCNA. PCNA stimulates the nuclease activity without altering cleavage specificity. It depends on Mg(2+) as a cofactor.

Functionally, structure-specific nuclease with 5'-flap endonuclease and 5'-3' exonuclease activities involved in DNA replication and repair. During DNA replication, cleaves the 5'-overhanging flap structure that is generated by displacement synthesis when DNA polymerase encounters the 5'-end of a downstream Okazaki fragment. Binds the unpaired 3'-DNA end and kinks the DNA to facilitate 5' cleavage specificity. Cleaves one nucleotide into the double-stranded DNA from the junction in flap DNA, leaving a nick for ligation. Also involved in the base excision repair (BER) pathway. Acts as a genome stabilization factor that prevents flaps from equilibrating into structures that lead to duplications and deletions. Also possesses 5'-3' exonuclease activity on nicked or gapped double-stranded DNA. This is Flap endonuclease 1 from Ignicoccus hospitalis (strain KIN4/I / DSM 18386 / JCM 14125).